The primary structure comprises 300 residues: GTPase Era (300 aa).

An Era-type G domain is found at 6–173; the sequence is KSGFLSIIGR…VDVLKEHLPE (168 aa). The segment at 14–21 is G1; the sequence is GRPNVGKS. 14–21 contacts GTP; it reads GRPNVGKS. The G2 stretch occupies residues 40-44; that stretch reads QTTRN. A G3 region spans residues 61 to 64; the sequence is DTPG. Residues 61–65 and 123–126 contribute to the GTP site; these read DTPGI and NKID. A G4 region spans residues 123-126; sequence NKID. Positions 152 to 154 are G5; that stretch reads ISA. A KH type-2 domain is found at 204–281; the sequence is TKEEVPHSIA…YLELWIKVKK (78 aa).

Belongs to the TRAFAC class TrmE-Era-EngA-EngB-Septin-like GTPase superfamily. Era GTPase family. In terms of assembly, monomer.

Its subcellular location is the cytoplasm. It localises to the cell membrane. Its function is as follows. An essential GTPase that binds both GDP and GTP, with rapid nucleotide exchange. Plays a role in 16S rRNA processing and 30S ribosomal subunit biogenesis and possibly also in cell cycle regulation and energy metabolism. The chain is GTPase Era from Oceanobacillus iheyensis (strain DSM 14371 / CIP 107618 / JCM 11309 / KCTC 3954 / HTE831).